The chain runs to 198 residues: MKKILVLYYSMYGHIERMAEAVAEGARSVPGVEVTLKRVPETMPEEVARKAGAKLDQAAPPAEPKELADYDAILFGTPTRFGNMAGQMRNFLDQTGGLWVSGALVGKFASVFTSTGTGGGSETTITSFWHTLAHHGMVIVGLPYVLPELSDVSEPRGGSPYGAATIAGADGSRRPSEKELILASFQGAHVARLVVRMQ.

The region spanning 4 to 190 (ILVLYYSMYG…ILASFQGAHV (187 aa)) is the Flavodoxin-like domain. FMN-binding positions include 10 to 15 (SMYGHI) and 79 to 81 (TRF). Tyrosine 12 lines the NAD(+) pocket. Substrate is bound at residue tryptophan 99. FMN contacts are provided by residues 114-119 (STGTGG) and histidine 134.

The protein belongs to the WrbA family. FMN is required as a cofactor.

The enzyme catalyses a quinone + NADH + H(+) = a quinol + NAD(+). It catalyses the reaction a quinone + NADPH + H(+) = a quinol + NADP(+). The protein is NAD(P)H dehydrogenase (quinone) of Azotobacter vinelandii (strain DJ / ATCC BAA-1303).